Reading from the N-terminus, the 409-residue chain is Argininosuccinate synthase (409 aa).

ATP is bound by residues 10 to 18 (AYSGGLDTS) and alanine 37. The L-citrulline site is built by tyrosine 90 and serine 95. Glycine 120 lines the ATP pocket. Residues threonine 122, asparagine 126, and aspartate 127 each contribute to the L-aspartate site. Asparagine 126 is a binding site for L-citrulline. The L-citrulline site is built by arginine 130, serine 182, serine 191, glutamate 267, and tyrosine 279.

The protein belongs to the argininosuccinate synthase family. Type 1 subfamily. As to quaternary structure, homotetramer.

It localises to the cytoplasm. It catalyses the reaction L-citrulline + L-aspartate + ATP = 2-(N(omega)-L-arginino)succinate + AMP + diphosphate + H(+). It functions in the pathway amino-acid biosynthesis; L-arginine biosynthesis; L-arginine from L-ornithine and carbamoyl phosphate: step 2/3. The polypeptide is Argininosuccinate synthase (Thiobacillus denitrificans (strain ATCC 25259 / T1)).